Reading from the N-terminus, the 157-residue chain is uncharacterized protein (157 aa).

One can recognise an N-acetyltransferase domain in the interval 9-154 (LLINYKTLDE…ETNLNAVTNE (146 aa)).

This is an uncharacterized protein from Bacillus cereus (strain B4264).